Consider the following 355-residue polypeptide: F-box protein At1g31080 (355 aa).

Positions 4–49 constitute an F-box domain; it reads GANSASIPNDLILEILSRLPAKSTGRFRCVSKLWGSMLCHSYFTEL. Positions 306 to 320 are enriched in polar residues; that stretch reads AGTSRSPPKQSTSTS. The segment at 306–333 is disordered; it reads AGTSRSPPKQSTSTSSREDHEVRTLAHQ. A compositionally biased stretch (basic and acidic residues) spans 321-333; it reads SREDHEVRTLAHQ.

This Arabidopsis thaliana (Mouse-ear cress) protein is F-box protein At1g31080.